We begin with the raw amino-acid sequence, 192 residues long: dTTP/UTP pyrophosphatase (192 aa).

The Proton acceptor role is filled by Asp-70.

It belongs to the Maf family. YhdE subfamily. A divalent metal cation is required as a cofactor.

It localises to the cytoplasm. It carries out the reaction dTTP + H2O = dTMP + diphosphate + H(+). It catalyses the reaction UTP + H2O = UMP + diphosphate + H(+). In terms of biological role, nucleoside triphosphate pyrophosphatase that hydrolyzes dTTP and UTP. May have a dual role in cell division arrest and in preventing the incorporation of modified nucleotides into cellular nucleic acids. The chain is dTTP/UTP pyrophosphatase from Clostridium perfringens (strain SM101 / Type A).